A 1167-amino-acid chain; its full sequence is Outer membrane protein SlpA (1167 aa).

Positions 1–22 (MKKSLIALTTALSFGLAAAQTA) are cleaved as a signal peptide. The Periplasmic segment spans residues 23-254 (APVSAPQVPA…RIAALERNAF (232 aa)). Residues 29-92 (QVPALTDVPA…DQMRDGETPA (64 aa)) enclose the SLH domain. A beta stranded membrane pass occupies residues 255–268 (SVKPSLTIGYSVSR). Residues 269-377 (TSRNFDVDRL…RNGFGFNNLA (109 aa)) lie on the Extracellular side of the membrane. Cu(2+) is bound by residues Asp274, Asp276, Arg305, Phe308, Asp310, and Glu381. The chain crosses the membrane as a beta stranded span at residues 378–403 (RYKEGSTDIGISLGFDTSGQFSQVTS). Residues 404 to 416 (GTGGSLFSTAGRL) lie on the Periplasmic side of the membrane. A beta stranded transmembrane segment spans residues 417–428 (QVNQIDLNFGLV). The Extracellular segment spans residues 429 to 471 (TGLPSDAYVDTNGNGKKDDGEATGRGTYLGSGGTAAILRDPAG). 5 residues coordinate Fe(3+): Asp438, Asn442, Lys444, Asp446, and Glu449. A beta stranded transmembrane segment spans residues 472–490 (NVYRPVFFRFKNATTQFSV). Topologically, residues 491–494 (GNNP) are periplasmic. A beta stranded membrane pass occupies residues 495 to 500 (VIVTLG). The Extracellular segment spans residues 501 to 519 (QQQKFYFSDYVFDNNYDGR). Cu(2+)-binding residues include Asp513 and Asn515. The chain crosses the membrane as a beta stranded span at residues 520–528 (GDGFTVTVD). Residues 529-540 (GSNVPVIGAWKP) lie on the Periplasmic side of the membrane. The beta stranded transmembrane segment at 541 to 549 (QIKGVYGSR) threads the bilayer. Residues Arg549, Gly551, Asp553, and Gly559 each coordinate Cu(2+). Residues 550–561 (SGLDGTAEAGYG) lie on the Extracellular side of the membrane. The beta stranded transmembrane segment at 562-571 (VYYRGVRAQI) threads the bilayer. Residues 572–577 (TPVGTL) lie on the Periplasmic side of the membrane. The beta stranded transmembrane segment at 578–588 (TAGIHYAQEGR) threads the bilayer. Topologically, residues 589 to 601 (DMFGAAQNTTSTP) are extracellular. A beta stranded membrane pass occupies residues 602–615 (SDVTTYGADLHGKA). Over 616–617 (FG) the chain is Periplasmic. A beta stranded membrane pass occupies residues 618–630 (VELHSEYATSRVR). A deinoxanthin-binding site is contributed by Ser622. At 631–638 (PNTANAAV) the chain is on the extracellular side. A beta stranded transmembrane segment spans residues 639-649 (QTSNAFYARVA). Topologically, residues 650-670 (TRKDNLAFDLNTPAAKFGNDT) are periplasmic. Residues 671–682 (FGVSLYDLNYRK) form a beta stranded membrane-spanning segment. Topologically, residues 683 to 753 (IDAGYNNVAG…GTVVATNTKI (71 aa)) are extracellular. A Cu(2+)-binding site is contributed by Gly716. Residues 754–766 (GQMGFGVKAAANL) form a beta stranded membrane-spanning segment. The Periplasmic portion of the chain corresponds to 767-768 (GP). Residues 769 to 779 (VAIGGYYDTST) traverse the membrane as a beta stranded segment. Topologically, residues 780-788 (GANGDNANR) are extracellular. Residues 789-798 (MTEAGGSAKV) form a beta stranded membrane-spanning segment. Residues 799–802 (AYSI) lie on the Periplasmic side of the membrane. The beta stranded transmembrane segment at 803-814 (FSLRGTYNTLDS) threads the bilayer. At 815-831 (NRPQIYRDAAGTQIIGD) the chain is on the extracellular side. Residues 832 to 843 (AKVRRYAVQADV) traverse the membrane as a beta stranded segment. Over 844 to 848 (TPGLG) the chain is Periplasmic. The beta stranded transmembrane segment at 849–860 (LFVGAYYRDVNV) threads the bilayer. Over 861–931 (NGVRSTTDRG…DQSRTATCFT (71 aa)) the chain is Extracellular. A beta stranded transmembrane segment spans residues 932–940 (SYGVEAGHA). Residues 941-949 (GDNANALVK) are Periplasmic-facing. Residues 950-960 (DLFFRVGYSRV) form a beta stranded membrane-spanning segment. Over 961–976 (YVPTTATATTGDFSGS) the chain is Extracellular. A beta stranded transmembrane segment spans residues 977 to 988 (VTYGDARYDRKV). At 989 to 990 (GV) the chain is on the periplasmic side. The chain crosses the membrane as a beta stranded span at residues 991-1002 (ANVRLAGSFSTT). The Extracellular portion of the chain corresponds to 1003–1014 (NTQLDSRPAGTR). A beta stranded membrane pass occupies residues 1015-1023 (GAVGLIVRT). Topologically, residues 1024–1032 (DPLENVPFR) are periplasmic. The beta stranded transmembrane segment at 1033–1046 (PQFNGQVGYYTADN) threads the bilayer. The Extracellular segment spans residues 1047–1052 (RVAAGN). A beta stranded membrane pass occupies residues 1053–1066 (YNANATKYGAGVVL). Topologically, residues 1067-1073 (NDFLLPQ) are periplasmic. Residues 1074–1086 (TKIGVRYDGYMAQ) form a beta stranded membrane-spanning segment. Over 1087–1108 (NRQYTPFDGDGTQGYFSDANNN) the chain is Extracellular. A beta stranded transmembrane segment spans residues 1109–1122 (RRTNLNGVYVEGAY). Topologically, residues 1123-1124 (QD) are periplasmic. Residues 1125-1138 (LIFSYGTYTLSQKD) traverse the membrane as a beta stranded segment. The Extracellular segment spans residues 1139 to 1153 (LNGVEYGSGINNGQP). The beta stranded transmembrane segment at 1154–1166 (ARGQTFKISYKVN) threads the bilayer. Phe1167 is a topological domain (periplasmic).

In terms of assembly, homotrimer. Part of a heterooligomeric complex resulting in the main assembly named S-layer deinoxanthin-binding complex (SDBC) which is composed of six different subunits, namely SlpA, DR_2310, DR_0505, DR_A0283, DR_A0282, and DR_A0281.

Its subcellular location is the cell envelope. The protein localises to the cell outer membrane. The enzyme catalyses L-arginine(in) = L-arginine(out). It catalyses the reaction L-lysine(in) = L-lysine(out). The catalysed reaction is L-glutamate(out) = L-glutamate(in). Plays an important role in the structural organization and integrity of the cell envelope, bridging the outer membrane to the peptidoglyan layer. Is a highly abundant molecule in the D.radiodurans cell envelope but is not a fundamental component of the S-layer. Binds the carotenoid deinoxanthin, a strong protective antioxidant specific of this bacterium, and could be part of the first lane of defense against UV radiation, especially under desiccation. Appears to be a nonselective channel. Is able to transport charged amino acids such as Lys, Arg and Glu; the large dimension of the pore points toward the physiological importance of the SDBC complex in assisting and allowing the exchange of substances, including nutrients, with the surrounding environment. This Deinococcus radiodurans (strain ATCC 13939 / DSM 20539 / JCM 16871 / CCUG 27074 / LMG 4051 / NBRC 15346 / NCIMB 9279 / VKM B-1422 / R1) protein is Outer membrane protein SlpA.